A 318-amino-acid polypeptide reads, in one-letter code: MAAGGGGGGGGSSSGRTPTWKERENNKKRERRRRAITAKIYSGLRAQGNYKLPKHCDNNEVLKALCLEAGWIVEDDGTTYRKGFKPPASDISGTPTNFSTNSSIQPSPQSSAFPSPAPSYHGSPVSSSFPSPSRYDGNPSSYLLLPFLHNIASSIPANLPPLRISNSAPVTPPLSSPTSRGSKRKLTSEQLPNGGSLHVLRHPLFAISAPSSPTRRAGHQTPPTIPECDESEEDSIEDSGRWINFQSTAPTSPTFNLVQQTSMAIDMKRSDWGMSGMNGRGAEFEFENGTVKPWEGEMIHEVGVEDLELTLGGTKARC.

A compositionally biased stretch (gly residues) spans 1 to 13 (MAAGGGGGGGGSS). Disordered regions lie at residues 1-34 (MAAGGGGGGGGSSSGRTPTWKERENNKKRERRRR), 84-133 (FKPP…PSPS), 166-195 (NSAPVTPPLSSPTSRGSKRKLTSEQLPNGG), and 209-231 (APSSPTRRAGHQTPPTIPECDES). Positions 16–97 (RTPTWKEREN…ASDISGTPTN (82 aa)) are required for DNA-binding. Polar residues predominate over residues 91 to 101 (ISGTPTNFSTN). The segment covering 102–133 (SSIQPSPQSSAFPSPAPSYHGSPVSSSFPSPS) has biased composition (low complexity).

This sequence belongs to the BZR/LAT61 family. Post-translationally, phosphorylated. Phosphorylation increases protein degradation.

The chain is BES1/BZR1 homolog protein 2 (BEH2) from Arabidopsis thaliana (Mouse-ear cress).